Here is a 276-residue protein sequence, read N- to C-terminus: MPRLDDHLWRGPCAKGTKHRSHPRASARGLVAKAGEMINSSGSGPSLLAAHGALGTDPAHGPQSAGVGGQGSSSHVNSWHHHLVQRSLVLFSVGVVLALVLNLLQVQRNVTLFPDEVIATIFSSAWWVPPCCGTAAAVVGLLYPCIDSHLGEPHKFKREWASVMRCVAVFVGINHASAKLDFANNVQLSLTLAALSLGLWWTFDRSRSGLGLGITIAFLATLITQLLVYNGVYQYTSPDFLYIRSWLPCIFFSGGVTVGNIGRQLAMGVPEKPHSD.

Disordered regions lie at residues 1 to 26 (MPRL…PRAS) and 49 to 73 (AAHG…QGSS). At 1 to 83 (MPRLDDHLWR…SHVNSWHHHL (83 aa)) the chain is on the cytoplasmic side. The span at 16-25 (GTKHRSHPRA) shows a compositional bias: basic residues. Residues 84 to 106 (VQRSLVLFSVGVVLALVLNLLQV) traverse the membrane as a helical segment. Topologically, residues 107–125 (QRNVTLFPDEVIATIFSSA) are extracellular. The chain crosses the membrane as a helical span at residues 126–143 (WWVPPCCGTAAAVVGLLY). The Cytoplasmic portion of the chain corresponds to 144–158 (PCIDSHLGEPHKFKR). Glycyl lysine isopeptide (Lys-Gly) (interchain with G-Cter in ubiquitin) cross-links involve residues Lys155 and Lys157. The helical transmembrane segment at 159–181 (EWASVMRCVAVFVGINHASAKLD) threads the bilayer. The Extracellular segment spans residues 182-184 (FAN). Residues 185–203 (NVQLSLTLAALSLGLWWTF) traverse the membrane as a helical segment. Residues 204–208 (DRSRS) are Cytoplasmic-facing. Residue Ser206 is modified to Phosphoserine. Residues 209–230 (GLGLGITIAFLATLITQLLVYN) traverse the membrane as a helical segment. The Extracellular portion of the chain corresponds to 231–244 (GVYQYTSPDFLYIR). The helical transmembrane segment at 245–262 (SWLPCIFFSGGVTVGNIG) threads the bilayer. At 263–276 (RQLAMGVPEKPHSD) the chain is on the cytoplasmic side. Positions 270–276 (PEKPHSD) match the KxHxx motif.

It belongs to the INSIG family. In terms of assembly, interacts with SCAP; interaction is direct and only takes place in the presence of sterols; it prevents interaction between SCAP and the coat protein complex II (COPII). Associates with the SCAP-SREBP complex (composed of SCAP and SREBF1/SREBP1 or SREBF2/SREBP2); association is mediated via its interaction with SCAP and only takes place in the presence of sterols. Interaction with SCAP is mutually exclusive with PAQR3. Interacts with HMGCR (via its SSD); the interaction, accelerated by sterols, leads to the recruitment of HMGCR to AMFR/gp78 for its ubiquitination by the sterol-mediated ERAD pathway. Interacts with AMFR/gp78 (via its membrane domain); the interaction recruits HMCR at the ER membrane for its ubiquitination and degradation by the sterol-mediated ERAD pathway. Interacts with SOAT2/ACAT2; leading to promote recruitment of AMFR/gp78 and subsequent ubiquitination of SOAT2/ACAT2. Interacts with RNF139. Interacts with RNF145. In terms of processing, phosphorylation at Ser-206 by PCK1 reduces binding to oxysterol, disrupting the interaction between INSIG1 and SCAP, thereby promoting nuclear translocation of SREBP proteins (SREBF1/SREBP1 or SREBF2/SREBP2) and subsequent transcription of downstream lipogenesis-related genes. Ubiquitinated by AMFR/gp78 in response to sterol deprivation, leading to its degradation: when the SCAP-SREBP complex becomes dissociated from INSIG1, INSIG1 is then ubiquitinated and degraded in proteasomes. Although ubiquitination is required for rapid INSIG1 degradation, it is not required for release of the SCAP-SREBP complex. Ubiquitinated by RNF139.

Its subcellular location is the endoplasmic reticulum membrane. Functionally, oxysterol-binding protein that mediates feedback control of cholesterol synthesis by controlling both endoplasmic reticulum to Golgi transport of SCAP and degradation of HMGCR. Acts as a negative regulator of cholesterol biosynthesis by mediating the retention of the SCAP-SREBP complex in the endoplasmic reticulum, thereby blocking the processing of sterol regulatory element-binding proteins (SREBPs) SREBF1/SREBP1 and SREBF2/SREBP2. Binds oxysterol, including 25-hydroxycholesterol, regulating interaction with SCAP and retention of the SCAP-SREBP complex in the endoplasmic reticulum. In presence of oxysterol, interacts with SCAP, retaining the SCAP-SREBP complex in the endoplasmic reticulum, thereby preventing SCAP from escorting SREBF1/SREBP1 and SREBF2/SREBP2 to the Golgi. Sterol deprivation or phosphorylation by PCK1 reduce oxysterol-binding, disrupting the interaction between INSIG1 and SCAP, thereby promoting Golgi transport of the SCAP-SREBP complex, followed by processing and nuclear translocation of SREBF1/SREBP1 and SREBF2/SREBP2. Also regulates cholesterol synthesis by regulating degradation of HMGCR: initiates the sterol-mediated ubiquitin-mediated endoplasmic reticulum-associated degradation (ERAD) of HMGCR via recruitment of the reductase to the ubiquitin ligases AMFR/gp78 and/or RNF139. Also regulates degradation of SOAT2/ACAT2 when the lipid levels are low: initiates the ubiquitin-mediated degradation of SOAT2/ACAT2 via recruitment of the ubiquitin ligases AMFR/gp78. This chain is Insulin-induced gene 1 protein, found in Bos taurus (Bovine).